Here is a 163-residue protein sequence, read N- to C-terminus: RRM-domain-containing protein ECU01_0840 (163 aa).

Residues 84–163 form the RRM domain; that stretch reads CSVKLSNLPL…SLGLSAEIAR (80 aa).

The protein is RRM-domain-containing protein ECU01_0840 of Encephalitozoon cuniculi (strain GB-M1) (Microsporidian parasite).